The chain runs to 87 residues: Homeotic protein ultrabithorax (87 aa).

The Antp-type hexapeptide motif lies at 22–27 (FYPWMA).

It belongs to the Antp homeobox family. As to expression, in the embryo, expression is seen in the epidermis, somatic and visceral mesoderm, and the peripheral and central nervous system.

It localises to the nucleus. Sequence-specific transcription factor which is part of a developmental regulatory system that provides cells with specific positional identities on the anterior-posterior axis. Binds the consensus region 5'-TTAAT[GT][GA]-3'. This homeotic protein controls development of the cells in the posterior thoracic and first abdominal segments. It activates the synthesis of the decapentaplegic (DPP) growth factor. The protein is Homeotic protein ultrabithorax (Ubx) of Drosophila virilis (Fruit fly).